The chain runs to 637 residues: Sodium-dependent proline transporter (637 aa).

Residues 1–45 (MKKLQEAHLRKPITPDLLMTPSDQGDVDLDVDFAADRGNWTGKLD) are Cytoplasmic-facing. The residue at position 20 (threonine 20) is a Phosphothreonine. Residue serine 22 is modified to Phosphoserine. 3 consecutive transmembrane segments (helical) span residues 46-66 (FLLS…FPYR), 74-93 (AFLV…LFFL), and 117-137 (GAGA…NMII). Topologically, residues 138-214 (AYVLFYLFAS…QGIGRPGEIR (77 aa)) are extracellular. A glycan (N-linked (GlcNAc...) asparagine) is linked at asparagine 182. A run of 9 helical transmembrane segments spans residues 215–233 (WNLC…LCIL), 242–259 (VVYF…MLLV), 295–312 (IFYS…FASY), 324–345 (FIVT…FSVL), 378–397 (LPLS…TLGL), 425–443 (VFSG…ILTT), 459–479 (SFGL…VYGI), 500–519 (ACWL…YSIV), and 538–556 (LGIL…GMLV). The Cytoplasmic portion of the chain corresponds to 557–637 (AVLREEGSLW…IAEEEEESMM (81 aa)). Phosphoserine is present on residues serine 573 and serine 582. Position 588 is a phosphothreonine (threonine 588). Tyrosine 591 is modified (phosphotyrosine). 2 positions are modified to phosphoserine: serine 598 and serine 600.

This sequence belongs to the sodium:neurotransmitter symporter (SNF) (TC 2.A.22) family. SLC6A7 subfamily.

The protein localises to the synaptic cell membrane. It catalyses the reaction L-proline(out) + chloride(out) + 2 Na(+)(out) = L-proline(in) + chloride(in) + 2 Na(+)(in). It carries out the reaction L-pipecolate(out) + chloride(out) + 2 Na(+)(out) = L-pipecolate(in) + chloride(in) + 2 Na(+)(in). Its function is as follows. Brain specific sodium (and chloride)-dependent proline transporter. Terminates the action of proline by its high affinity sodium-dependent reuptake into presynaptic terminals. This chain is Sodium-dependent proline transporter, found in Mus musculus (Mouse).